We begin with the raw amino-acid sequence, 166 residues long: Small ribosomal subunit protein uS5 (166 aa).

Residues 11–74 form the S5 DRBM domain; it reads LQEKLIAVNR…EKARRNMMNV (64 aa).

It belongs to the universal ribosomal protein uS5 family. Part of the 30S ribosomal subunit. Contacts proteins S4 and S8.

Functionally, with S4 and S12 plays an important role in translational accuracy. Its function is as follows. Located at the back of the 30S subunit body where it stabilizes the conformation of the head with respect to the body. This Sodalis glossinidius (strain morsitans) protein is Small ribosomal subunit protein uS5.